Consider the following 236-residue polypeptide: CD81 antigen (236 aa).

Residues 1–12 (MGVEGCTKCIKY) lie on the Cytoplasmic side of the membrane. A helical transmembrane segment spans residues 13–33 (LLFVFNFVFWLAGGVILGVAL). Over 34–63 (WLRHDPQTTNLLYLELGDKPAPNTFYVGIY) the chain is Extracellular. The helical transmembrane segment at 64-84 (ILIAVGAVMMFVGFLGCYGAI) threads the bilayer. Over 85-89 (QESQC) the chain is Cytoplasmic. The chain crosses the membrane as a helical span at residues 90 to 112 (LLGTFFTCLVILFACEVAAGIWG). Residues 113–201 (FVNKDQIAKD…QKIDDLFSGK (89 aa)) are Extracellular-facing. 2 disulfides stabilise this stretch: cysteine 156–cysteine 190 and cysteine 157–cysteine 175. Residues 202–224 (LYLIGIAAIVVAVIMIFEMILSM) form a helical membrane-spanning segment. Position 219 (glutamate 219) interacts with cholesterol. Over 225–236 (VLCCGIRNSSVY) the chain is Cytoplasmic.

Belongs to the tetraspanin (TM4SF) family. In terms of assembly, homodimer. Part of a complex composed of CD19, CR2/CD21, CD81 and IFITM1/CD225 in the membrane of mature B cells. Interacts (via the second extracellular domain) with CD19; this interaction is initiated early during biosynthesis in the ER and enables trafficking of only properly folded CD19. Part of a complex that includes MHC class II/HLA-DR molecules and IFITM1. Interacts with IFITM1. Interacts with IFITM2 and IFITM3. Part of integrin-tetraspanin complex composed of CD9, CD81, beta-1 and beta-2 integrins in the membrane of monocyte/macrophages. Interacts (via the second extracellular domain) with integrin ITGAV:ITGB3. Interacts with CD247/CD3 zeta, ICAM1 and CD9 at the immune synapse on T cell membrane. Part of a GPCR-tetraspanin complex consisting at least of ADGRG1, CD81, possibly CD9, and GNA11 in which CD81 enhances the association of ADGRG1 with GNA11. Part of a complex composed of CD9, CD81, PTGFRN and IGSF8. Interacts directly with IGSF8. Interacts with CD53 and SCIMP. Interacts with SAMHD1 (via its C-terminus). Interacts with glypican GPC3 and with the transcriptional repressor HHEX; binding to GPC3 decreases the availability of free CD81 for binding to HHEX, resulting in nuclear translocation of HHEX and transcriptional repression. Interacts with CLDN1. Interacts with CLDN6 and CLDN9. Post-translationally, not glycosylated. In terms of processing, likely constitutively palmitoylated at low levels. Protein palmitoylation is up-regulated upon coligation of BCR and CD9-C2R-CD81 complexes in lipid rafts.

It is found in the cell membrane. Its subcellular location is the basolateral cell membrane. Structural component of specialized membrane microdomains known as tetraspanin-enriched microdomains (TERMs), which act as platforms for receptor clustering and signaling. Essential for trafficking and compartmentalization of CD19 receptor on the surface of activated B cells. Upon initial encounter with microbial pathogens, enables the assembly of CD19-CR2/CD21 and B cell receptor (BCR) complexes at signaling TERMs, lowering the threshold dose of antigen required to trigger B cell clonal expansion and antibody production. In T cells, facilitates the localization of CD247/CD3 zeta at antigen-induced synapses with B cells, providing for costimulation and polarization toward T helper type 2 phenotype. Present in MHC class II compartments, may also play a role in antigen presentation. Can act both as positive and negative regulator of homotypic or heterotypic cell-cell fusion processes. Positively regulates sperm-egg fusion and may be involved in acrosome reaction. In myoblasts, associates with CD9 and PTGFRN and inhibits myotube fusion during muscle regeneration. In macrophages, associates with CD9 and beta-1 and beta-2 integrins, and prevents macrophage fusion into multinucleated giant cells specialized in ingesting complement-opsonized large particles. Also prevents the fusion of mononuclear cell progenitors into osteoclasts in charge of bone resorption. May regulate the compartmentalization of enzymatic activities. In T cells, defines the subcellular localization of dNTPase SAMHD1 and permits its degradation by the proteasome, thereby controlling intracellular dNTP levels. Also involved in cell adhesion and motility. Positively regulates integrin-mediated adhesion of macrophages, particularly relevant for the inflammatory response in the lung. The protein is CD81 antigen (CD81) of Pan troglodytes (Chimpanzee).